Here is an 83-residue protein sequence, read N- to C-terminus: uncharacterized protein (83 aa).

A disordered region spans residues 58-83 (EHGHDDEYDEFSDPNAWVPRRSRDTG).

This is an uncharacterized protein from Mycobacterium tuberculosis (strain CDC 1551 / Oshkosh).